The chain runs to 521 residues: Chromaffin granule amine transporter (521 aa).

The Cytoplasmic segment spans residues 1–21 (MLQVVLGAPQRLLKEGRQSRK). Residues 22–42 (LVLVVVFVALLLDNMLLTVVV) form a helical membrane-spanning segment. The Lumenal, vesicle portion of the chain corresponds to 43 to 135 (PIVPTFLYAT…IEFLEEENVR (93 aa)). Residues Asn58, Asn87, and Asn104 are each glycosylated (N-linked (GlcNAc...) asparagine). A helical membrane pass occupies residues 136-155 (IGILFASKALMQLLVNPFVG). Residues 156-164 (PLTNRIGYH) are Cytoplasmic-facing. Residues 165–185 (IPMFVGFMIMFLSTLMFAFSG) form a helical membrane-spanning segment. The Lumenal, vesicle segment spans residues 186–194 (TYALLFVAR). A helical membrane pass occupies residues 195-215 (TLQGIGSSFSSVAGLGMLASV). The Cytoplasmic portion of the chain corresponds to 216 to 224 (YTDNYERGR). The helical transmembrane segment at 225–247 (AMGIALGGLALGLLVGAPFGSVM) threads the bilayer. The Lumenal, vesicle portion of the chain corresponds to 248-253 (YEFVGK). A helical membrane pass occupies residues 254–276 (SSPFLILAFLALLDGALQLCILW). Topologically, residues 277–296 (PSKVSPESAMGTSLLTLLKD) are cytoplasmic. A helical transmembrane segment spans residues 297 to 316 (PYILVAAGSICLANMGVAIL). At 317 to 332 (EPTLPIWMMQTMCSPE) the chain is on the lumenal, vesicle side. Residues 333–357 (WQLGLAFLPASVAYLIGTNLFGVLA) form a helical membrane-spanning segment. Residues 358-362 (NKMGR) lie on the Cytoplasmic side of the membrane. The chain crosses the membrane as a helical span at residues 363 to 383 (WLCSLVGMVAVGISLLCVPLA). Residues 384 to 394 (HNIFGLIGPNA) are Lumenal, vesicle-facing. Residues 395 to 415 (GLGFAIGMVDSSLMPIMGYLV) form a helical membrane-spanning segment. Over 416 to 419 (DLRH) the chain is Cytoplasmic. A helical membrane pass occupies residues 420 to 440 (TSVYGSVYAIADVAFCVGFAI). Topologically, residues 441 to 445 (GPSTG) are lumenal, vesicle. A helical transmembrane segment spans residues 446-467 (GVIVQVIGFPWLMVIIGTINII). At 468–521 (YAPLCCFLQNPPAKEEKRAILSQECPTETQMYTFQKPTKAFPLGENSDDPSSGE) the chain is on the cytoplasmic side.

This sequence belongs to the major facilitator superfamily. Vesicular transporter family. Adrenal gland.

Its subcellular location is the cytoplasmic vesicle. The protein resides in the secretory vesicle membrane. It is found in the secretory vesicle. The protein localises to the synaptic vesicle membrane. It catalyses the reaction serotonin(in) + 2 H(+)(out) = serotonin(out) + 2 H(+)(in). It carries out the reaction (R)-noradrenaline(in) + 2 H(+)(out) = (R)-noradrenaline(out) + 2 H(+)(in). The catalysed reaction is dopamine(in) + 2 H(+)(out) = dopamine(out) + 2 H(+)(in). With respect to regulation, strongly inhibited by reserpine, ketanserin and methamphetamine. Also inhibited weakly by tetrabenazine. Its function is as follows. Electrogenic antiporter that exchanges one cationic monoamine with two intravesicular protons across the membrane of secretory and synaptic vesicles. Uses the electrochemical proton gradient established by the V-type proton-pump ATPase to accumulate high concentrations of monoamines inside the vesicles prior to their release via exocytosis. Transports catecholamines and indolamines with higher affinity for serotonin. Regulates the transvesicular monoaminergic gradient that determines the quantal size. Mediates presynaptic monoaminergic vesicle transport in the amygdala and prefrontal brain regions related with emotion processing in response to environmental stimuli. The protein is Chromaffin granule amine transporter (Slc18a1) of Rattus norvegicus (Rat).